The primary structure comprises 369 residues: Protein-glutamate methylesterase/protein-glutamine glutaminase (369 aa).

The Response regulatory domain occupies 4-121 (KVLVVDDSSF…ARNRDEAVSL (118 aa)). Aspartate 55 is modified (4-aspartylphosphate). Over residues 146 to 171 (ATSSARPLASRTAAPAASAPARPATT) the composition is skewed to low complexity. The disordered stretch occupies residues 146-175 (ATSSARPLASRTAAPAASAPARPATTKFRA). The 194-residue stretch at 176-369 (SGKKYQLTAI…ERMLVEVGLA (194 aa)) folds into the CheB-type methylesterase domain. Residues serine 188, histidine 215, and aspartate 311 contribute to the active site.

It belongs to the CheB family. In terms of processing, phosphorylated by CheA. Phosphorylation of the N-terminal regulatory domain activates the methylesterase activity.

It is found in the cytoplasm. It catalyses the reaction [protein]-L-glutamate 5-O-methyl ester + H2O = L-glutamyl-[protein] + methanol + H(+). It carries out the reaction L-glutaminyl-[protein] + H2O = L-glutamyl-[protein] + NH4(+). In terms of biological role, involved in chemotaxis. Part of a chemotaxis signal transduction system that modulates chemotaxis in response to various stimuli. Catalyzes the demethylation of specific methylglutamate residues introduced into the chemoreceptors (methyl-accepting chemotaxis proteins or MCP) by CheR. Also mediates the irreversible deamidation of specific glutamine residues to glutamic acid. This chain is Protein-glutamate methylesterase/protein-glutamine glutaminase, found in Vibrio parahaemolyticus serotype O3:K6 (strain RIMD 2210633).